Reading from the N-terminus, the 354-residue chain is Glutamine synthetase (354 aa).

The 80-residue stretch at 22–101 (FHAEYVWIDG…VLSETYNNDG (80 aa)) folds into the GS beta-grasp domain. In terms of domain architecture, GS catalytic spans 108–354 (HRHHTAKVME…IIIETTILDK (247 aa)).

It belongs to the glutamine synthetase family. In terms of assembly, homooctamer.

The protein localises to the cytoplasm. The catalysed reaction is L-glutamate + NH4(+) + ATP = L-glutamine + ADP + phosphate + H(+). This is Glutamine synthetase (GLN1) from Amanita muscaria (Fly agaric).